The following is a 93-amino-acid chain: Putative defensin-like protein 190 (93 aa).

An N-terminal signal peptide occupies residues 1–30; sequence MKMAKAAATNDFGFITCLVIFLVLAGISNG. Disulfide bonds link Cys39/Cys89, Cys55/Cys75, Cys60/Cys84, and Cys64/Cys86.

It belongs to the DEFL family.

It localises to the secreted. The polypeptide is Putative defensin-like protein 190 (Arabidopsis thaliana (Mouse-ear cress)).